Consider the following 265-residue polypeptide: Hydroxyethylthiazole kinase (265 aa).

Methionine 50 is a substrate binding site. Residues arginine 125 and threonine 171 each coordinate ATP. Residue glycine 198 coordinates substrate.

It belongs to the Thz kinase family. Mg(2+) is required as a cofactor.

It catalyses the reaction 5-(2-hydroxyethyl)-4-methylthiazole + ATP = 4-methyl-5-(2-phosphooxyethyl)-thiazole + ADP + H(+). It participates in cofactor biosynthesis; thiamine diphosphate biosynthesis; 4-methyl-5-(2-phosphoethyl)-thiazole from 5-(2-hydroxyethyl)-4-methylthiazole: step 1/1. Functionally, catalyzes the phosphorylation of the hydroxyl group of 4-methyl-5-beta-hydroxyethylthiazole (THZ). The sequence is that of Hydroxyethylthiazole kinase from Salmonella paratyphi A (strain ATCC 9150 / SARB42).